A 332-amino-acid chain; its full sequence is DNA-directed RNA polymerase subunit alpha (332 aa).

The interval 1–234 is alpha N-terminal domain (alpha-NTD); it reads MTVTVSQVLR…DQLSVFGDFT (234 aa). The interval 248–332 is alpha C-terminal domain (alpha-CTD); the sequence is VDPVLLRPID…PGVSQYGMLG (85 aa).

The protein belongs to the RNA polymerase alpha chain family. As to quaternary structure, homodimer. The RNAP catalytic core consists of 2 alpha, 1 beta, 1 beta' and 1 omega subunit. When a sigma factor is associated with the core the holoenzyme is formed, which can initiate transcription.

It carries out the reaction RNA(n) + a ribonucleoside 5'-triphosphate = RNA(n+1) + diphosphate. In terms of biological role, DNA-dependent RNA polymerase catalyzes the transcription of DNA into RNA using the four ribonucleoside triphosphates as substrates. In Xylella fastidiosa (strain M23), this protein is DNA-directed RNA polymerase subunit alpha.